Consider the following 373-residue polypeptide: MKNILIFPFLSISTGHHHVADALQAELESQGLAAEKIDIFSHSYRRLEKLSSVAYLKWIQYFPKTYSGIYRLLACGEFQHDKRYFMYEWLFTQQMRHILQEKQPDIAFCTHALPSYLLNRLKPEYPNLTVVNVYTDFFVNQLWGRKNIDYHFVPSTEVKKQLISEGIDQNNIYLTGIPVHQNFEMESADTLQHHPPYTIIITGGSMGVGGILKWVQELSPGGKILYKILCGRNEKLYSYVKSLHHPLIEAIPYLHSKAEMNRLYEQATGIMTKPGGVTISECLQKRLPVFIYHALPGQEEMNLNLLHERKLVTDMRNWDMQKAEEYIAAFFQSNEQMKEYKKHVNGYLGEMSDRKIKDVLKRIIWKQKNTLLK.

This sequence belongs to the glycosyltransferase 28 family.

This is an uncharacterized protein from Bacillus subtilis (strain 168).